The sequence spans 228 residues: Isonitrile hydratase (228 aa).

The active site involves cysteine 101.

As to quaternary structure, homodimer.

The enzyme catalyses N-cyclohexylformamide = cyclohexyl isocyanide + H2O. Sensitive to thiol reagents and oxidizing reagents, but is not influenced by chelators or reducing reagents. In terms of biological role, catalyzes the hydration of cyclohexyl isocyanide to N-cyclohexylformamide. Acts on various isonitriles, but not on nitriles or amides. Probably involved in detoxification. This chain is Isonitrile hydratase (inhA), found in Pseudomonas putida (Arthrobacter siderocapsulatus).